The following is a 485-amino-acid chain: Lysophospholipid acyltransferase 5 (485 aa).

An N-acetylalanine modification is found at Ala2. 7 consecutive transmembrane segments (helical) span residues Ala35–Phe55, Tyr82–Leu102, Thr108–Tyr128, Trp139–Tyr158, Ile176–Leu196, Leu232–Asp252, and Val283–Leu303. Catalysis depends on residues Asn336 and His372. Transmembrane regions (helical) follow at residues Gly362–Phe382, Leu420–Phe440, and Val448–Pro468. A Di-lysine motif motif is present at residues Lys482–Glu485.

This sequence belongs to the membrane-bound acyltransferase family.

The protein resides in the endoplasmic reticulum membrane. The enzyme catalyses a 1-acyl-sn-glycero-3-phosphocholine + an acyl-CoA = a 1,2-diacyl-sn-glycero-3-phosphocholine + CoA. It carries out the reaction a 1-acyl-sn-glycero-3-phosphoethanolamine + an acyl-CoA = a 1,2-diacyl-sn-glycero-3-phosphoethanolamine + CoA. The catalysed reaction is a 1-acyl-sn-glycero-3-phospho-L-serine + an acyl-CoA = a 1,2-diacyl-sn-glycero-3-phospho-L-serine + CoA. It catalyses the reaction (9Z,12Z)-octadecadienoyl-CoA + a 1-acyl-sn-glycero-3-phosphocholine = 1-acyl-2-(9Z,12Z)-octadecadienoyl-sn-glycero-3-phosphocholine + CoA. The enzyme catalyses (5Z,8Z,11Z,14Z)-eicosatetraenoyl-CoA + a 1-acyl-sn-glycero-3-phosphocholine = 1-acyl-2-(5Z,8Z,11Z,14Z-eicosatetraenoyl)-sn-glycero-3-phosphocholine + CoA. It carries out the reaction dodecanoyl-CoA + 1-hexadecanoyl-sn-glycero-3-phosphocholine = 1-hexadecanoyl-2-dodecanoyl-sn-glycero-3-phosphocholine + CoA. The catalysed reaction is octadecanoyl-CoA + 1-hexadecanoyl-sn-glycero-3-phosphocholine = 1-hexadecanoyl-2-octadecanoyl-sn-glycero-3-phosphocholine + CoA. It catalyses the reaction 1-dodecanoyl-sn-glycero-3-phosphocholine + hexadecanoyl-CoA = 1-dodecanoyl-2-hexadecanoyl-sn-glycero-3-phosphocholine + CoA. The enzyme catalyses 1-tetradecanoyl-sn-glycero-3-phosphocholine + hexadecanoyl-CoA = 1-tetradecanoyl-2-hexadecanoyl-sn-glycero-3-phosphocholine + CoA. It carries out the reaction 1-hexadecanoyl-sn-glycero-3-phosphocholine + hexadecanoyl-CoA = 1,2-dihexadecanoyl-sn-glycero-3-phosphocholine + CoA. The catalysed reaction is 1-octadecanoyl-sn-glycero-3-phosphocholine + hexadecanoyl-CoA = 1-octadecanoyl-2-hexadecanoyl-sn-glycero-3-phosphocholine + CoA. It catalyses the reaction 1-(9Z-octadecenoyl)-sn-glycero-3-phosphocholine + hexadecanoyl-CoA = 1-(9Z-octadecenoyl)-2-hexadecanoyl-sn-glycero-3-phosphocholine + CoA. The enzyme catalyses (9Z)-hexadecenoyl-CoA + 1-hexadecanoyl-sn-glycero-3-phosphocholine = 1-hexadecanoyl-2-(9Z-hexadecenoyl)-sn-glycero-3-phosphocholine + CoA. It carries out the reaction 1-hexadecanoyl-sn-glycero-3-phosphocholine + (9Z)-octadecenoyl-CoA = 1-hexadecanoyl-2-(9Z-octadecenoyl)-sn-glycero-3-phosphocholine + CoA. The catalysed reaction is (9Z,12Z)-octadecadienoyl-CoA + 1-hexadecanoyl-sn-glycero-3-phosphocholine = 1-hexadecanoyl-2-(9Z,12Z-octadecadienoyl)-sn-glycero-3-phosphocholine + CoA. It catalyses the reaction 1-dodecanoyl-sn-glycero-3-phosphocholine + (5Z,8Z,11Z,14Z)-eicosatetraenoyl-CoA = 1-dodecanoyl-2-(5Z,8Z,11Z,14Z)-eicosatetraenoyl-sn-glycero-3-phosphocholine + CoA. The enzyme catalyses (5Z,8Z,11Z,14Z)-eicosatetraenoyl-CoA + 1-hexadecanoyl-sn-glycero-3-phosphocholine = 1-hexadecanoyl-2-(5Z,8Z,11Z,14Z-eicosatetraenoyl)-sn-glycero-3-phosphocholine + CoA. It carries out the reaction 1-octadecanoyl-sn-glycero-3-phosphocholine + (5Z,8Z,11Z,14Z)-eicosatetraenoyl-CoA = 1-octadecanoyl-2-(5Z,8Z,11Z,14Z-eicosatetraenoyl)-sn-glycero-3-phosphocholine + CoA. The catalysed reaction is 1-eicosanoyl-sn-glycero-3-phosphocholine + (5Z,8Z,11Z,14Z)-eicosatetraenoyl-CoA = 1-eicosanoyl-2-(5Z,8Z,11Z,14Z)-eicosatetraenoyl-sn-glycero-3-phosphocholine + CoA. It catalyses the reaction 1-(9Z-octadecenoyl)-sn-glycero-3-phosphocholine + (9Z)-octadecenoyl-CoA = 1,2-di-(9Z-octadecenoyl)-sn-glycero-3-phosphocholine + CoA. The enzyme catalyses 1-(9Z-octadecenoyl)-sn-glycero-3-phosphocholine + (9Z,12Z)-octadecadienoyl-CoA = 1-(9Z)-octadecenoyl-2-(9Z,12Z)-octadecadienoyl-sn-glycero-3-phosphocholine + CoA. It carries out the reaction 1-(9Z-octadecenoyl)-sn-glycero-3-phosphocholine + (5Z,8Z,11Z,14Z)-eicosatetraenoyl-CoA = 1-(9Z)-octadecenoyl-2-(5Z,8Z,11Z,14Z)-icosatetraenoyl-sn-glycero-3-phosphocholine + CoA. The catalysed reaction is a 1-acyl-sn-glycero-3-phosphoethanolamine + (9Z,12Z)-octadecadienoyl-CoA = 1-acyl-2-(9Z,12Z)-octadecadienoyl-sn-glycero-3-phosphoethanolamine + CoA. It catalyses the reaction 1-(9Z-octadecenoyl)-sn-glycero-3-phosphoethanolamine + (9Z,12Z)-octadecadienoyl-CoA = 1-(9Z)-octadecenoyl-2-(9Z,12Z)-octadecadienoyl-sn-glycero-3-phosphoethanolamine + CoA. The enzyme catalyses 1-(10Z-heptadecenoyl)-sn-glycero-3-phosphoethanolamine + (9Z,12Z)-octadecadienoyl-CoA = 1-(10Z-heptadecenoyl)-2-(9Z,12Z-octadecadienoyl)-sn-glycero-3-phosphoethanolamine + CoA. It carries out the reaction a 1-acyl-sn-glycero-3-phosphoethanolamine + (5Z,8Z,11Z,14Z)-eicosatetraenoyl-CoA = 1-acyl-2-(5Z,8Z,11Z,14Z)-eicosatetraenoyl-sn-glycero-3-phosphoethanolamine + CoA. The catalysed reaction is 1-hexadecanoyl-sn-glycero-3-phosphoethanolamine + (5Z,8Z,11Z,14Z)-eicosatetraenoyl-CoA = 1-hexadecanoyl-2-(5Z,8Z,11Z,14Z-eicosatetraenoyl)-sn-glycero-3-phosphoethanolamine + CoA. It catalyses the reaction 1-(9Z-octadecenoyl)-sn-glycero-3-phosphoethanolamine + (5Z,8Z,11Z,14Z)-eicosatetraenoyl-CoA = 1-(9Z)-octadecenoyl-2-(5Z,8Z,11Z,14Z)-eicosatetraenoyl-sn-glycero-3-phosphoethanolamine + CoA. The enzyme catalyses 1-(10Z-heptadecenoyl)-sn-glycero-3-phosphoethanolamine + (5Z,8Z,11Z,14Z)-eicosatetraenoyl-CoA = 1-(10Z-heptadecenoyl)-2-(5Z,8Z,11Z,14Z-eicosatetraenoyl)-sn-glycero-3-phosphoethanolamine + CoA. It carries out the reaction a 1-O-(1Z-alkenyl)-sn-glycero-3-phosphoethanolamine + (5Z,8Z,11Z,14Z)-eicosatetraenoyl-CoA = 1-O-(1Z)-alkenyl-2-(5Z,8Z,11Z,14Z)-eicosatetraenoyl-sn-glycero-3-phosphoethanolamine + CoA. The catalysed reaction is a 1-acyl-sn-glycero-3-phospho-L-serine + (9Z,12Z)-octadecadienoyl-CoA = 1-acyl-2-(9Z,12Z-octadecadienoyl)-sn-glycero-3-phospho-L-serine + CoA. It catalyses the reaction a 1-acyl-sn-glycero-3-phospho-L-serine + (5Z,8Z,11Z,14Z)-eicosatetraenoyl-CoA = 1-acyl-2-(5Z,8Z,11Z,14Z-eicosatetraenoyl)-sn-glycero-3-phospho-L-serine + CoA. The enzyme catalyses 1-hexadecanoyl-sn-glycero-3-phospho-L-serine + (9Z)-octadecenoyl-CoA = 1-hexadecanoyl-2-(9Z-octadecenoyl)-sn-glycero-3-phospho-L-serine + CoA. It carries out the reaction 1-(9Z-octadecenoyl)-sn-glycero-3-phospho-L-serine + (9Z)-octadecenoyl-CoA = 1,2-di-(9Z)-octadecenoyl-sn-glycero-3-phospho-L-serine + CoA. The catalysed reaction is 1-hexadecanoyl-sn-glycero-3-phospho-L-serine + (9Z,12Z)-octadecadienoyl-CoA = 1-hexadecanoyl-2-(9Z,12Z-octadecadienoyl)-sn-glycero-3-phospho-L-serine + CoA. It catalyses the reaction 1-(9Z-octadecenoyl)-sn-glycero-3-phospho-L-serine + (9Z,12Z)-octadecadienoyl-CoA = 1-(9Z-octadecenoyl)-2-(9Z,12Z-octadienoyl)-sn-glycero-3-phospho-L-serine + CoA. The enzyme catalyses 1-hexadecanoyl-sn-glycero-3-phospho-L-serine + (5Z,8Z,11Z,14Z)-eicosatetraenoyl-CoA = 1-hexadecanoyl-2-(5Z,8Z,11Z,14Z-eicosatetraenoyl)-sn-glycero-3-phospho-L-serine + CoA. It carries out the reaction 1-(9Z-octadecenoyl)-sn-glycero-3-phospho-L-serine + (5Z,8Z,11Z,14Z)-eicosatetraenoyl-CoA = 1-(9Z-octadecenoyl)-2-(5Z,8Z,11Z,14Z-eicosatetraenoyl)-sn-glycero-3-phospho-L-serine + CoA. The protein operates within lipid metabolism; phospholipid metabolism. Lysophospholipid O-acyltransferase (LPLAT) that catalyzes the reacylation step of the phospholipid remodeling process also known as the Lands cycle. Catalyzes transfer of the fatty acyl chain from fatty acyl-CoA to 1-acyl lysophospholipid to form various classes of phospholipids. Converts 1-acyl lysophosphatidylcholine (LPC) into phosphatidylcholine (PC) (LPCAT activity), 1-acyl lysophosphatidylserine (LPS) into phosphatidylserine (PS) (LPSAT activity) and 1-acyl lysophosphatidylethanolamine (LPE) into phosphatidylethanolamine (PE) (LPEAT activity). Favors polyunsaturated fatty acyl-CoAs as acyl donors compared to saturated fatty acyl-CoAs. Has higher activity for LPC acyl acceptors compared to LPEs and LPSs. Can also transfer the fatty acyl chain from fatty acyl-CoA to 1-O-alkyl lysophospholipid or 1-O-alkenyl lysophospholipid with lower efficiency. Acts as a major LPC O-acyltransferase in liver and intestine. As a component of the liver X receptor/NR1H3 or NR1H2 signaling pathway, mainly catalyzes the incorporation of arachidonate into PCs of endoplasmic reticulum (ER) membranes, increasing membrane dynamics and enabling triacylglycerols transfer to nascent very low-density lipoprotein (VLDL) particles. Promotes processing of sterol regulatory protein SREBF1 in hepatocytes, likely by facilitating the translocation of SREBF1-SCAP complex from ER to the Golgi apparatus. Participates in mechanisms by which the liver X receptor/NR1H3 or NR1H2 signaling pathway counteracts lipid-induced ER stress response and inflammation. Down-regulates hepatic inflammation by limiting arachidonic acid availability for synthesis of inflammatory eicosanoids, such as prostaglandins. In enterocytes, acts as a component of a gut-brain feedback loop that coordinates dietary lipid absorption and food intake. Regulates the abundance of PCs containing linoleate and arachidonate in enterocyte membranes, enabling passive diffusion of fatty acids and cholesterol across the membrane for efficient chylomicron assembly. In the intestinal crypt, acts as a component of dietary-responsive phospholipid-cholesterol axis, regulating the biosynthesis of cholesterol and its mitogenic effects on intestinal stem cells. The chain is Lysophospholipid acyltransferase 5 (LPCAT3) from Bos taurus (Bovine).